A 360-amino-acid polypeptide reads, in one-letter code: Photosystem II protein D1 (360 aa).

Transmembrane regions (helical) follow at residues 29 to 46, 118 to 133, and 142 to 156; these read YVGW…TATT, HFLL…QWEL, and WICV…AATA. Residue His-118 coordinates chlorophyll a. Residue Tyr-126 participates in pheophytin a binding. Residues Asp-170 and Glu-189 each coordinate [CaMn4O5] cluster. Residues 197–218 traverse the membrane as a helical segment; the sequence is FHMLGVAGVFGGSLFSAMHGSL. His-198 provides a ligand contact to chlorophyll a. Residues His-215 and 264–265 contribute to the a quinone site; that span reads SF. A Fe cation-binding site is contributed by His-215. His-272 provides a ligand contact to Fe cation. Residues 274–288 traverse the membrane as a helical segment; that stretch reads FLGAWPVIGIWFTAM. Positions 332, 333, 342, and 344 each coordinate [CaMn4O5] cluster. Positions 345 to 360 are excised as a propeptide; that stretch reads SGEQAPVALTAPAING.

The protein belongs to the reaction center PufL/M/PsbA/D family. In terms of assembly, PSII is composed of 1 copy each of membrane proteins PsbA, PsbB, PsbC, PsbD, PsbE, PsbF, PsbH, PsbI, PsbJ, PsbK, PsbL, PsbM, PsbT, PsbX, PsbY, PsbZ, Psb30/Ycf12, peripheral proteins PsbO, CyanoQ (PsbQ), PsbU, PsbV and a large number of cofactors. It forms dimeric complexes. Requires The D1/D2 heterodimer binds P680, chlorophylls that are the primary electron donor of PSII, and subsequent electron acceptors. It shares a non-heme iron and each subunit binds pheophytin, quinone, additional chlorophylls, carotenoids and lipids. D1 provides most of the ligands for the Mn4-Ca-O5 cluster of the oxygen-evolving complex (OEC). There is also a Cl(-1) ion associated with D1 and D2, which is required for oxygen evolution. The PSII complex binds additional chlorophylls, carotenoids and specific lipids. as cofactor. Post-translationally, tyr-161 forms a radical intermediate that is referred to as redox-active TyrZ, YZ or Y-Z. In terms of processing, C-terminally processed by CtpA; processing is essential to allow assembly of the oxygen-evolving complex and thus photosynthetic growth.

The protein resides in the cellular thylakoid membrane. The enzyme catalyses 2 a plastoquinone + 4 hnu + 2 H2O = 2 a plastoquinol + O2. Its function is as follows. Photosystem II (PSII) is a light-driven water:plastoquinone oxidoreductase that uses light energy to abstract electrons from H(2)O, generating O(2) and a proton gradient subsequently used for ATP formation. It consists of a core antenna complex that captures photons, and an electron transfer chain that converts photonic excitation into a charge separation. The D1/D2 (PsbA/PsbD) reaction center heterodimer binds P680, the primary electron donor of PSII as well as several subsequent electron acceptors. The chain is Photosystem II protein D1 from Microcystis aeruginosa.